Here is a 160-residue protein sequence, read N- to C-terminus: Endoribonuclease YbeY (160 aa).

Positions 125, 129, and 135 each coordinate Zn(2+).

It belongs to the endoribonuclease YbeY family. The cofactor is Zn(2+).

Its subcellular location is the cytoplasm. In terms of biological role, single strand-specific metallo-endoribonuclease involved in late-stage 70S ribosome quality control and in maturation of the 3' terminus of the 16S rRNA. The protein is Endoribonuclease YbeY of Leuconostoc mesenteroides subsp. mesenteroides (strain ATCC 8293 / DSM 20343 / BCRC 11652 / CCM 1803 / JCM 6124 / NCDO 523 / NBRC 100496 / NCIMB 8023 / NCTC 12954 / NRRL B-1118 / 37Y).